Reading from the N-terminus, the 382-residue chain is 2-heptyl-3-hydroxy-4(1H)-quinolone synthase (382 aa).

The protein belongs to the 3-hydroxybenzoate 6-hydroxylase family.

The catalysed reaction is 2-heptyl-4(1H)-quinolone + NADH + O2 + H(+) = 2-heptyl-3-hydroxy-4(1H)-quinolone + NAD(+) + H2O. Involved in the terminal step of the biosynthesis of quinolone which in addition to serve as a potent signal for quorum sensing, chelates iron and promotes the formation of membrane vesicles (MVs). Catalyzes the hydroxylation of 2-heptyl-4-quinolone (C7-HHQ) to yield 2-heptyl-3-hydroxy-4-quinolone (PQS). The chain is 2-heptyl-3-hydroxy-4(1H)-quinolone synthase (pqsH) from Pseudomonas aeruginosa (strain ATCC 15692 / DSM 22644 / CIP 104116 / JCM 14847 / LMG 12228 / 1C / PRS 101 / PAO1).